We begin with the raw amino-acid sequence, 162 residues long: Large ribosomal subunit protein uL10 (162 aa).

Belongs to the universal ribosomal protein uL10 family. As to quaternary structure, part of the ribosomal stalk of the 50S ribosomal subunit. The N-terminus interacts with L11 and the large rRNA to form the base of the stalk. The C-terminus forms an elongated spine to which L12 dimers bind in a sequential fashion forming a multimeric L10(L12)X complex.

Functionally, forms part of the ribosomal stalk, playing a central role in the interaction of the ribosome with GTP-bound translation factors. This is Large ribosomal subunit protein uL10 from Aliarcobacter butzleri (strain RM4018) (Arcobacter butzleri).